A 175-amino-acid chain; its full sequence is Adenine phosphoribosyltransferase (175 aa).

The protein belongs to the purine/pyrimidine phosphoribosyltransferase family. As to quaternary structure, homodimer.

Its subcellular location is the cytoplasm. The catalysed reaction is AMP + diphosphate = 5-phospho-alpha-D-ribose 1-diphosphate + adenine. It functions in the pathway purine metabolism; AMP biosynthesis via salvage pathway; AMP from adenine: step 1/1. In terms of biological role, catalyzes a salvage reaction resulting in the formation of AMP, that is energically less costly than de novo synthesis. This is Adenine phosphoribosyltransferase from Parvibaculum lavamentivorans (strain DS-1 / DSM 13023 / NCIMB 13966).